The following is a 239-amino-acid chain: Ribonuclease PH (239 aa).

Phosphate contacts are provided by residues Arg86 and Gly124–Arg126.

The protein belongs to the RNase PH family. Homohexameric ring arranged as a trimer of dimers.

The enzyme catalyses tRNA(n+1) + phosphate = tRNA(n) + a ribonucleoside 5'-diphosphate. Its function is as follows. Phosphorolytic 3'-5' exoribonuclease that plays an important role in tRNA 3'-end maturation. Removes nucleotide residues following the 3'-CCA terminus of tRNAs; can also add nucleotides to the ends of RNA molecules by using nucleoside diphosphates as substrates, but this may not be physiologically important. Probably plays a role in initiation of 16S rRNA degradation (leading to ribosome degradation) during starvation. The sequence is that of Ribonuclease PH from Rhodopseudomonas palustris (strain BisB18).